Consider the following 290-residue polypeptide: Acetyl-coenzyme A carboxylase carboxyl transferase subunit beta (290 aa).

The region spanning 28–290 (VMTKCPQCKK…KGGEEGWWRN (263 aa)) is the CoA carboxyltransferase N-terminal domain. Residues C32, C35, C51, and C54 each coordinate Zn(2+). The C4-type zinc-finger motif lies at 32 to 54 (CPQCKKIMYTKELIKNLRVCLSC).

The protein belongs to the AccD/PCCB family. Acetyl-CoA carboxylase is a heterohexamer composed of biotin carboxyl carrier protein (AccB), biotin carboxylase (AccC) and two subunits each of ACCase subunit alpha (AccA) and ACCase subunit beta (AccD). Requires Zn(2+) as cofactor.

It localises to the cytoplasm. The catalysed reaction is N(6)-carboxybiotinyl-L-lysyl-[protein] + acetyl-CoA = N(6)-biotinyl-L-lysyl-[protein] + malonyl-CoA. It functions in the pathway lipid metabolism; malonyl-CoA biosynthesis; malonyl-CoA from acetyl-CoA: step 1/1. Functionally, component of the acetyl coenzyme A carboxylase (ACC) complex. Biotin carboxylase (BC) catalyzes the carboxylation of biotin on its carrier protein (BCCP) and then the CO(2) group is transferred by the transcarboxylase to acetyl-CoA to form malonyl-CoA. The polypeptide is Acetyl-coenzyme A carboxylase carboxyl transferase subunit beta (Geobacillus kaustophilus (strain HTA426)).